The chain runs to 92 residues: Acylphosphatase (92 aa).

C5 and C49 form a disulfide bridge. The Acylphosphatase-like domain maps to 5–92 (CIIAWIYGRV…SGELTDFRIR (88 aa)). Catalysis depends on residues R20 and N38.

It belongs to the acylphosphatase family.

The enzyme catalyses an acyl phosphate + H2O = a carboxylate + phosphate + H(+). The sequence is that of Acylphosphatase from Escherichia coli O1:K1 / APEC.